The primary structure comprises 365 residues: Prostaglandin E2 receptor EP3 subtype (365 aa).

At 1–30 the chain is on the extracellular side; it reads MAGVWAPEHSVEAHSNQSSAADGCGSVSVA. Asn-16 carries N-linked (GlcNAc...) asparagine glycosylation. Residues 31–55 traverse the membrane as a helical segment; it reads FPITMMVTGFVGNALAMLLVVRSYR. Residues 56 to 68 are Cytoplasmic-facing; it reads RRESKRKKSFLLC. The chain crosses the membrane as a helical span at residues 69-89; it reads IGWLALTDLVGQLLTSPVVIL. The Extracellular portion of the chain corresponds to 90–108; that stretch reads VYLSQRRWEQLDPSGRLCT. Cys-107 and Cys-184 are oxidised to a cystine. Residues 109–130 traverse the membrane as a helical segment; that stretch reads FFGLTMTVFGLSSLLVASAMAV. Residues 131 to 151 are Cytoplasmic-facing; it reads ERALAIRAPHWYASHMKTRAT. A helical membrane pass occupies residues 152–173; that stretch reads PVLLGVWLSVLAFALLPVLGVG. At 174–203 the chain is on the extracellular side; the sequence is RYSVQWPGTWCFISTGPAGNETDSAREPGS. Asn-193 carries N-linked (GlcNAc...) asparagine glycosylation. The helical transmembrane segment at 204–229 threads the bilayer; sequence VAFASAFACLGLLALVVTFACNLATI. Topologically, residues 230–259 are cytoplasmic; sequence KALVSRCRAKAAASQSSAQWGRITTETAIQ. A helical transmembrane segment spans residues 260–283; that stretch reads LMGIMCVLSVCWSPLLIMMLKMIF. The Extracellular portion of the chain corresponds to 284–303; the sequence is NQMSVEQCKTQMGKEKECNS. Residues 304–325 traverse the membrane as a helical segment; the sequence is FLIAVRLASLNQILDPWVYLLL. At 326 to 365 the chain is on the cytoplasmic side; sequence RKILLRKFCQIRDHTNYASSSTSLPCPGSSVLMWSDQLER.

This sequence belongs to the G-protein coupled receptor 1 family. As to quaternary structure, interacts (via C-terminus) with MKLN1. Does not interact with MKLN1. As to expression, principally expressed in the tubules of the renal medulla. Specific expression is seen in medullary and cortical thick ascending limbs; lower levels are detected in cortical and inner medullary collecting ducts. Not detected significantly in the glomeruli. In the brain, expressed in all types of glial cells.

It is found in the cell membrane. In terms of biological role, receptor for prostaglandin E2 (PGE2). Required for normal development of fever in response to pyrinogens, including IL1B, prostaglandin E2 and bacterial lipopolysaccharide (LPS). Required for normal potentiation of platelet aggregation by prostaglandin E2, and thus plays a role in the regulation of blood coagulation. Required for increased HCO3(-) secretion in the duodenum in response to mucosal acidification, and thereby contributes to the protection of the mucosa against acid-induced ulceration. Not required for normal kidney function, normal urine volume and osmolality. Receptor for prostaglandin E2 (PGE2); ligand binding activates a signaling cascade via G(i) proteins that leads to the inhibition of adenylate cyclase. Its function is as follows. Receptor for prostaglandin E2 (PGE2); ligand binding can activate several distinct signaling cascades, resulting in activation or inhibition of adenylate cyclase. The protein is Prostaglandin E2 receptor EP3 subtype (Ptger3) of Rattus norvegicus (Rat).